The primary structure comprises 195 residues: MIASVRGEVIDIALDHAVIEAAGVGYKVMATPSTLATLRRGTEARLITAMIVREDSMTLYGFVDGDARDLFLTLLGVSGVGPKIALATLAVYDPQALRQALADGDVTALTRVPGIGKRGAERMVLELRDKIGPVSAGGGAAVGGHAIRGPVVEALVGLGFAAKQAEEATDKVLANDPEATTSSALRAALSMLGKK.

A domain I region spans residues 1–63 (MIASVRGEVI…EDSMTLYGFV (63 aa)). The interval 64–142 (DGDARDLFLT…PVSAGGGAAV (79 aa)) is domain II. The segment at 143–150 (GGHAIRGP) is flexible linker. A domain III region spans residues 150–195 (PVVEALVGLGFAAKQAEEATDKVLANDPEATTSSALRAALSMLGKK).

This sequence belongs to the RuvA family. As to quaternary structure, homotetramer. Forms an RuvA(8)-RuvB(12)-Holliday junction (HJ) complex. HJ DNA is sandwiched between 2 RuvA tetramers; dsDNA enters through RuvA and exits via RuvB. An RuvB hexamer assembles on each DNA strand where it exits the tetramer. Each RuvB hexamer is contacted by two RuvA subunits (via domain III) on 2 adjacent RuvB subunits; this complex drives branch migration. In the full resolvosome a probable DNA-RuvA(4)-RuvB(12)-RuvC(2) complex forms which resolves the HJ.

The protein resides in the cytoplasm. In terms of biological role, the RuvA-RuvB-RuvC complex processes Holliday junction (HJ) DNA during genetic recombination and DNA repair, while the RuvA-RuvB complex plays an important role in the rescue of blocked DNA replication forks via replication fork reversal (RFR). RuvA specifically binds to HJ cruciform DNA, conferring on it an open structure. The RuvB hexamer acts as an ATP-dependent pump, pulling dsDNA into and through the RuvAB complex. HJ branch migration allows RuvC to scan DNA until it finds its consensus sequence, where it cleaves and resolves the cruciform DNA. This chain is Holliday junction branch migration complex subunit RuvA, found in Mycolicibacterium smegmatis (strain ATCC 700084 / mc(2)155) (Mycobacterium smegmatis).